Consider the following 312-residue polypeptide: Ribosomal RNA small subunit methyltransferase H (312 aa).

Positions 1–24 are disordered; sequence MNIMTANQGAVSPSQTESEASPPT. S-adenosyl-L-methionine-binding positions include 55–57, D72, Y96, D117, and Q124; that span reads AGH. The segment at 288 to 312 is disordered; it reads EQVDNPRARSAKLRVGERAAAPEGS.

This sequence belongs to the methyltransferase superfamily. RsmH family.

The protein localises to the cytoplasm. It catalyses the reaction cytidine(1402) in 16S rRNA + S-adenosyl-L-methionine = N(4)-methylcytidine(1402) in 16S rRNA + S-adenosyl-L-homocysteine + H(+). In terms of biological role, specifically methylates the N4 position of cytidine in position 1402 (C1402) of 16S rRNA. In Deinococcus radiodurans (strain ATCC 13939 / DSM 20539 / JCM 16871 / CCUG 27074 / LMG 4051 / NBRC 15346 / NCIMB 9279 / VKM B-1422 / R1), this protein is Ribosomal RNA small subunit methyltransferase H.